Consider the following 655-residue polypeptide: MSEPLIELRDVWREFAAGDQVVAVLREVNLSIQAGEMVAIVGASGSGKSTLMNILGCLDRPSRGGYRVDGRETARMDPDELAELRREHFGFIFQRYHLLADLSAQANVEMPAVYAGMASGPRHERAAALLRRLGLSERLDYRPGQLSGGQQQRVSIARALMNGGRIILADEPTGALDTQTGQEVLRILKELNAAGHTIVLVTHDMSVARHARRIIEISDGRIVSDQARPDAPPLDALAGDEGPEAPRPAPQPLRAWLDRGSEALRMALLAMNAHRLRTCLTMLGIIIGIAAVVSVVALGAGSRQMILDDISAMGTNTVDVLPGKHFGDEKAASIRTLVAADVEALARQPYADSVSPEVTTSATLRYRNVSVNGTVQGVGEQYPRVRGVRIAQGQFFDAAAVARRGQDVVIDNNTRKALFGNHTDPIGQVIFIGAVPARVIGVTRPQETLFGNADALHVWIPYTTALSRILGQQHLRSITVRVNDSTPPKAAEAAITKLMLQRHGTQDFFVFNTDTIRQTVERTTATLTLLVSMIAVISLVVVGIGVMNIMLVSVTERTREIGVRMAVGARRSDIMQQFLIEAVLVCLIGGVLGILLSLSIGVLVSQATRGAFQMLYSSGSMVLAFVCSTLIGVAFGFLPARSAARLDPVESLARE.

One can recognise an ABC transporter domain in the interval 6-244; it reads IELRDVWREF…DALAGDEGPE (239 aa). 42–49 lines the ATP pocket; the sequence is GASGSGKS. The interval 225–252 is disordered; sequence DQARPDAPPLDALAGDEGPEAPRPAPQP. Transmembrane regions (helical) follow at residues 280 to 300, 527 to 547, 583 to 603, and 620 to 640; these read LTMLGIIIGIAAVVSVVALGA, LTLLVSMIAVISLVVVGIGVM, VLVCLIGGVLGILLSLSIGVL, and SMVLAFVCSTLIGVAFGFLPA.

The protein belongs to the ABC transporter superfamily. Macrolide exporter (TC 3.A.1.122) family. In terms of assembly, homodimer.

It is found in the cell inner membrane. Functionally, non-canonical ABC transporter that contains transmembrane domains (TMD), which form a pore in the inner membrane, and an ATP-binding domain (NBD), which is responsible for energy generation. Confers resistance against macrolides. This Bordetella avium (strain 197N) protein is Macrolide export ATP-binding/permease protein MacB.